The following is a 307-amino-acid chain: MPQSVLKATSEDLKKMKSAYAHHLTDTLPPGALFQAKVPGCTITAYRSGKVLFQGQKAEAEASQFSHLKATDPKSSKTPAVTKYSPPSGIASMSVIGSDEVGTGDYFGPITVCAAYVDASHLALMKELGVKDSKGLKDPQIINIAKDLIKTIPFSLLVLRNEKYNAMQEKGMSQGKMKALLHNQVITSALEKLDGKQPEAILIDQFAEPGIYFKHLAGKKIIRERTYFSTKAEGIHLSVAAASIIARYAFLIEMDKLSEAAGFEIPKGAGPHVDKAAAKLIKLHGEEALRQFTKLHFANTQKAKKWL.

In terms of domain architecture, RNase H type-2 spans 93–307 (MSVIGSDEVG…ANTQKAKKWL (215 aa)). The a divalent metal cation site is built by Asp99, Glu100, and Asp204.

Belongs to the RNase HII family. RnhC subfamily. Requires Mn(2+) as cofactor. Mg(2+) serves as cofactor.

The protein localises to the cytoplasm. It carries out the reaction Endonucleolytic cleavage to 5'-phosphomonoester.. Functionally, endonuclease that specifically degrades the RNA of RNA-DNA hybrids. This Bacillus pumilus (strain SAFR-032) protein is Ribonuclease HIII.